The sequence spans 690 residues: Dual specificity protein kinase lkh1 (690 aa).

The segment at 39–70 is disordered; it reads PNLPPPFSVHQLQSFVPPQPPSSSSPSTTGTV. The region spanning 362 to 682 is the Protein kinase domain; sequence YTVVRLLGHG…AKEALWHPFF (321 aa). ATP-binding positions include 368–376 and Lys391; that span reads LGHGTFGKV. Asp488 functions as the Proton acceptor in the catalytic mechanism.

The protein belongs to the protein kinase superfamily. CMGC Ser/Thr protein kinase family. Lammer subfamily. Post-translationally, autophosphorylates on all three types of residues.

It catalyses the reaction L-seryl-[protein] + ATP = O-phospho-L-seryl-[protein] + ADP + H(+). The enzyme catalyses L-threonyl-[protein] + ATP = O-phospho-L-threonyl-[protein] + ADP + H(+). It carries out the reaction L-tyrosyl-[protein] + ATP = O-phospho-L-tyrosyl-[protein] + ADP + H(+). Functionally, protein kinase that may act as a negative regulator of filamentous growth and flocculation. Appears to have a role in normal cell wall and septum formation and in cell separation. May have antagonistic function in the regulation of beta-glucan distribution between the sites for cell wall and septum assembly. This chain is Dual specificity protein kinase lkh1 (lkh1), found in Schizosaccharomyces pombe (strain 972 / ATCC 24843) (Fission yeast).